Here is a 613-residue protein sequence, read N- to C-terminus: Dihydroxy-acid dehydratase (613 aa).

Aspartate 81 is a binding site for Mg(2+). Cysteine 122 serves as a coordination point for [2Fe-2S] cluster. Residues aspartate 123 and lysine 124 each contribute to the Mg(2+) site. Position 124 is an N6-carboxylysine (lysine 124). Cysteine 193 is a binding site for [2Fe-2S] cluster. A Mg(2+)-binding site is contributed by glutamate 489. Residue serine 515 is the Proton acceptor of the active site.

It belongs to the IlvD/Edd family. Homodimer. [2Fe-2S] cluster is required as a cofactor. Mg(2+) serves as cofactor.

It catalyses the reaction (2R)-2,3-dihydroxy-3-methylbutanoate = 3-methyl-2-oxobutanoate + H2O. The catalysed reaction is (2R,3R)-2,3-dihydroxy-3-methylpentanoate = (S)-3-methyl-2-oxopentanoate + H2O. The protein operates within amino-acid biosynthesis; L-isoleucine biosynthesis; L-isoleucine from 2-oxobutanoate: step 3/4. It participates in amino-acid biosynthesis; L-valine biosynthesis; L-valine from pyruvate: step 3/4. Functionally, functions in the biosynthesis of branched-chain amino acids. Catalyzes the dehydration of (2R,3R)-2,3-dihydroxy-3-methylpentanoate (2,3-dihydroxy-3-methylvalerate) into 2-oxo-3-methylpentanoate (2-oxo-3-methylvalerate) and of (2R)-2,3-dihydroxy-3-methylbutanoate (2,3-dihydroxyisovalerate) into 2-oxo-3-methylbutanoate (2-oxoisovalerate), the penultimate precursor to L-isoleucine and L-valine, respectively. This chain is Dihydroxy-acid dehydratase, found in Pseudomonas putida (strain ATCC 700007 / DSM 6899 / JCM 31910 / BCRC 17059 / LMG 24140 / F1).